The sequence spans 400 residues: Putative cytochrome P450 133B2 (400 aa).

Cys-348 provides a ligand contact to heme.

The protein belongs to the cytochrome P450 family. Requires heme as cofactor.

The polypeptide is Putative cytochrome P450 133B2 (cyp133B2) (Xylella fastidiosa (strain 9a5c)).